The sequence spans 392 residues: MKVTRLAVLNTLATLTVAWLPTTDKTITSSNGTDLFKASHGKIRGVNLGSQFVFEPWIATKAWSELGCEGQESEFDCVMKLGQDAANKAFAKHWDSWITKEDIKEIRSYGLNTIRIPVGYWMNEDLIYHDSEYFPHGGFAYLEKLCGWASDAGLYIIIDLHGAPGAQVAKNAFTGQFADTPGFYVDFQYQRALEFLEWMTIKVHTLHNFRNVGMLEVVNEPVQNPQVTTTLRSNYYPNAFHSIRKVEGALSIDRKDYLHIQMMDGAWGAGDPHEHLTDDYYAAYDNHRYLKWDPRVEVSKDSYIKTSCNDNVATNWPAIIGEWSLGVPDNVQETADWKPYSNLDFYQKWFAAQVQNYEQHQGWIFWTWKTQLDEYRWSYRGTYLSGFWQTSS.

Residues 1–18 (MKVTRLAVLNTLATLTVA) form the signal peptide. A glycan (N-linked (GlcNAc...) asparagine) is linked at N31. Residue E220 is the Proton donor of the active site. The Nucleophile role is filled by E322.

This sequence belongs to the glycosyl hydrolase 5 (cellulase A) family.

It is found in the secreted. The enzyme catalyses Random hydrolysis of (1-&gt;6)-linkages in (1-&gt;6)-beta-D-glucans.. Beta-glucanases participate in the metabolism of beta-glucan, the main structural component of the cell wall. Acts on lutean, pustulan and 1,6-oligo-beta-D-glucosides. This is Probable glucan endo-1,6-beta-glucosidase B (exgB) from Aspergillus flavus (strain ATCC 200026 / FGSC A1120 / IAM 13836 / NRRL 3357 / JCM 12722 / SRRC 167).